The sequence spans 32 residues: Apolipophorin-3 (32 aa).

The segment at 1–32 (DAPSTTPPQDXEKKAAEFQKTFTEQXNQLANK) is disordered. A compositionally biased stretch (polar residues) spans 20 to 32 (KTFTEQXNQLANK).

Belongs to the insect apolipophorin-3 family. Equilibrium between a soluble monomer and a bound lipoprotein form. Apolipophorin-3 associates with lipophorin during lipid loading until each particle contains 9 or 14 molecules of apolipophorin-3. As to expression, hemolymph.

It localises to the secreted. Its function is as follows. Assists in the loading of diacylglycerol, generated from triacylglycerol stores in the fat body through the action of adipokinetic hormone, into lipophorin, the hemolymph lipoprotein. It increases the lipid carrying capacity of lipophorin by covering the expanding hydrophobic surface resulting from diacylglycerol uptake. It thus plays a critical role in the transport of lipids during flight in several species of insects. This chain is Apolipophorin-3, found in Diatraea grandiosella (Southwestern corn borer).